The primary structure comprises 323 residues: Acetyl-coenzyme A carboxylase carboxyl transferase subunit alpha (323 aa).

In terms of domain architecture, CoA carboxyltransferase C-terminal spans 39–293 (RLSKKSQQLT…RRALGDSLRQ (255 aa)).

It belongs to the AccA family. As to quaternary structure, acetyl-CoA carboxylase is a heterohexamer composed of biotin carboxyl carrier protein (AccB), biotin carboxylase (AccC) and two subunits each of ACCase subunit alpha (AccA) and ACCase subunit beta (AccD).

The protein localises to the cytoplasm. It carries out the reaction N(6)-carboxybiotinyl-L-lysyl-[protein] + acetyl-CoA = N(6)-biotinyl-L-lysyl-[protein] + malonyl-CoA. The protein operates within lipid metabolism; malonyl-CoA biosynthesis; malonyl-CoA from acetyl-CoA: step 1/1. In terms of biological role, component of the acetyl coenzyme A carboxylase (ACC) complex. First, biotin carboxylase catalyzes the carboxylation of biotin on its carrier protein (BCCP) and then the CO(2) group is transferred by the carboxyltransferase to acetyl-CoA to form malonyl-CoA. The polypeptide is Acetyl-coenzyme A carboxylase carboxyl transferase subunit alpha (Burkholderia pseudomallei (strain 1106a)).